A 613-amino-acid chain; its full sequence is Dihydroxy-acid dehydratase (613 aa).

Position 81 (Asp-81) interacts with Mg(2+). Position 122 (Cys-122) interacts with [2Fe-2S] cluster. Residues Asp-123 and Lys-124 each coordinate Mg(2+). Lys-124 carries the N6-carboxylysine modification. Cys-195 serves as a coordination point for [2Fe-2S] cluster. Glu-491 contacts Mg(2+). The active-site Proton acceptor is the Ser-517.

This sequence belongs to the IlvD/Edd family. As to quaternary structure, homodimer. Requires [2Fe-2S] cluster as cofactor. The cofactor is Mg(2+).

It carries out the reaction (2R)-2,3-dihydroxy-3-methylbutanoate = 3-methyl-2-oxobutanoate + H2O. The enzyme catalyses (2R,3R)-2,3-dihydroxy-3-methylpentanoate = (S)-3-methyl-2-oxopentanoate + H2O. Its pathway is amino-acid biosynthesis; L-isoleucine biosynthesis; L-isoleucine from 2-oxobutanoate: step 3/4. It functions in the pathway amino-acid biosynthesis; L-valine biosynthesis; L-valine from pyruvate: step 3/4. In terms of biological role, functions in the biosynthesis of branched-chain amino acids. Catalyzes the dehydration of (2R,3R)-2,3-dihydroxy-3-methylpentanoate (2,3-dihydroxy-3-methylvalerate) into 2-oxo-3-methylpentanoate (2-oxo-3-methylvalerate) and of (2R)-2,3-dihydroxy-3-methylbutanoate (2,3-dihydroxyisovalerate) into 2-oxo-3-methylbutanoate (2-oxoisovalerate), the penultimate precursor to L-isoleucine and L-valine, respectively. In Buchnera aphidicola subsp. Melaphis rhois, this protein is Dihydroxy-acid dehydratase.